The primary structure comprises 62 residues: Protein P14 (62 aa).

Needed for optimal phage development. The polypeptide is Protein P14 (P14) (Pseudomonas savastanoi pv. phaseolicola (Pseudomonas syringae pv. phaseolicola)).